We begin with the raw amino-acid sequence, 330 residues long: Methylthioribose-1-phosphate isomerase (330 aa).

Substrate contacts are provided by residues 49–51 (RGA), Arg83, and Gln179. Asp220 serves as the catalytic Proton donor. 230–231 (NK) provides a ligand contact to substrate.

It belongs to the eIF-2B alpha/beta/delta subunits family. MtnA subfamily.

It catalyses the reaction 5-(methylsulfanyl)-alpha-D-ribose 1-phosphate = 5-(methylsulfanyl)-D-ribulose 1-phosphate. It functions in the pathway amino-acid biosynthesis; L-methionine biosynthesis via salvage pathway; L-methionine from S-methyl-5-thio-alpha-D-ribose 1-phosphate: step 1/6. Its function is as follows. Catalyzes the interconversion of methylthioribose-1-phosphate (MTR-1-P) into methylthioribulose-1-phosphate (MTRu-1-P). This is Methylthioribose-1-phosphate isomerase from Thermus thermophilus (strain ATCC BAA-163 / DSM 7039 / HB27).